The chain runs to 257 residues: Snake venom serine protease nikobin (257 aa).

The signal sequence occupies residues Met-1–Ala-18. Positions Gln-19 to Leu-24 are excised as a propeptide. The region spanning Val-25 to Ala-248 is the Peptidase S1 domain. Disulfide bonds link Cys-31/Cys-162, Cys-49/Cys-65, Cys-97/Cys-255, Cys-141/Cys-209, Cys-173/Cys-188, and Cys-199/Cys-224. Catalysis depends on charge relay system residues His-64 and Asp-109. N-linked (GlcNAc...) asparagine glycans are attached at residues Asn-120 and Asn-121. The Charge relay system role is filled by Ser-203. The N-linked (GlcNAc...) asparagine glycan is linked to Asn-250.

This sequence belongs to the peptidase S1 family. Snake venom subfamily. In terms of assembly, monomer. As to expression, expressed by the venom gland.

The protein resides in the secreted. Snake venom serine protease that may act in the hemostasis system of the prey. In Vipera nikolskii (Nikolsky's adder), this protein is Snake venom serine protease nikobin (sp-VN).